A 256-amino-acid chain; its full sequence is Thiazole synthase (256 aa).

Catalysis depends on lysine 96, which acts as the Schiff-base intermediate with DXP. 1-deoxy-D-xylulose 5-phosphate is bound by residues glycine 157, 183–184, and 205–206; these read AG and NT.

The protein belongs to the ThiG family. Homotetramer. Forms heterodimers with either ThiH or ThiS.

Its subcellular location is the cytoplasm. The enzyme catalyses [ThiS sulfur-carrier protein]-C-terminal-Gly-aminoethanethioate + 2-iminoacetate + 1-deoxy-D-xylulose 5-phosphate = [ThiS sulfur-carrier protein]-C-terminal Gly-Gly + 2-[(2R,5Z)-2-carboxy-4-methylthiazol-5(2H)-ylidene]ethyl phosphate + 2 H2O + H(+). The protein operates within cofactor biosynthesis; thiamine diphosphate biosynthesis. Its function is as follows. Catalyzes the rearrangement of 1-deoxy-D-xylulose 5-phosphate (DXP) to produce the thiazole phosphate moiety of thiamine. Sulfur is provided by the thiocarboxylate moiety of the carrier protein ThiS. In vitro, sulfur can be provided by H(2)S. This Bacillus cereus (strain ATCC 10987 / NRS 248) protein is Thiazole synthase.